Here is a 325-residue protein sequence, read N- to C-terminus: Heme A synthase (325 aa).

A run of 5 helical transmembrane segments spans residues tryptophan 6 to leucine 26, leucine 88 to glycine 108, leucine 116 to valine 136, leucine 155 to isoleucine 175, and leucine 184 to alanine 204. Histidine 246 serves as a coordination point for heme. 3 consecutive transmembrane segments (helical) span residues methionine 248–aspartate 268, valine 275–phenylalanine 295, and isoleucine 297–valine 317. Histidine 305 contacts heme.

This sequence belongs to the COX15/CtaA family. Type 2 subfamily. As to quaternary structure, interacts with CtaB. It depends on heme b as a cofactor.

It is found in the cell membrane. It catalyses the reaction Fe(II)-heme o + 2 A + H2O = Fe(II)-heme a + 2 AH2. The protein operates within porphyrin-containing compound metabolism; heme A biosynthesis; heme A from heme O: step 1/1. Catalyzes the conversion of heme O to heme A by two successive hydroxylations of the methyl group at C8. The first hydroxylation forms heme I, the second hydroxylation results in an unstable dihydroxymethyl group, which spontaneously dehydrates, resulting in the formyl group of heme A. This chain is Heme A synthase, found in Neorickettsia sennetsu (strain ATCC VR-367 / Miyayama) (Ehrlichia sennetsu).